A 142-amino-acid polypeptide reads, in one-letter code: Large ribosomal subunit protein bL17 (142 aa).

The protein belongs to the bacterial ribosomal protein bL17 family. In terms of assembly, part of the 50S ribosomal subunit. Contacts protein L32.

This chain is Large ribosomal subunit protein bL17, found in Wolbachia sp. subsp. Brugia malayi (strain TRS).